A 493-amino-acid chain; its full sequence is 1-aminocyclopropane-1-carboxylate synthase CMW33 (493 aa).

K279 carries the N6-(pyridoxal phosphate)lysine modification.

The protein belongs to the class-I pyridoxal-phosphate-dependent aminotransferase family. Homodimer. Pyridoxal 5'-phosphate serves as cofactor.

It carries out the reaction S-adenosyl-L-methionine = 1-aminocyclopropane-1-carboxylate + S-methyl-5'-thioadenosine + H(+). It functions in the pathway alkene biosynthesis; ethylene biosynthesis via S-adenosyl-L-methionine; ethylene from S-adenosyl-L-methionine: step 1/2. In terms of biological role, catalyzes the formation of 1-aminocyclopropane-1-carboxylate, a direct precursor of ethylene in higher plants. The protein is 1-aminocyclopropane-1-carboxylate synthase CMW33 (ACS1) of Cucurbita maxima (Pumpkin).